The sequence spans 1181 residues: Lysine-specific demethylase hairless (1181 aa).

Residues 311 to 323 (TPRCPSPGPPTPP) show a composition bias toward pro residues. 3 disordered regions span residues 311–378 (TPRC…HTKL), 413–472 (AGSP…DGRI), and 509–543 (SHSQKSHKLPLEEKPLEEDSCATSEEGGGSSPEAS). A compositionally biased stretch (low complexity) spans 347-357 (SPEGSSSGPGE). Over residues 447–461 (TPETSTGSKAEAQQQ) the composition is skewed to polar residues. Over residues 462-472 (EEQRGPRDGRI) the composition is skewed to basic and acidic residues. Residues 560–564 (LCRLL) carry the LXXLL motif 1 motif. The C6-type zinc-finger motif lies at 594-619 (CSRCHHGLFNTHWRCSHCSHRLCVAC). The segment at 696 to 745 (GDGGQQKEPTEKTPPAPQLSCNGDSNRTKDIKEETPDSTESPAEDRAGRS) is disordered. Basic and acidic residues predominate over residues 721 to 730 (NRTKDIKEET). The LXXLL motif 2 signature appears at 752-756 (LCELL). The region spanning 938–1149 (DESRVENLAS…LSAQLCHQGA (212 aa)) is the JmjC domain. 3 residues coordinate Fe cation: Cys999, Glu1001, and His1117.

Requires Fe(2+) as cofactor.

Its subcellular location is the nucleus. It catalyses the reaction N(6),N(6)-dimethyl-L-lysyl(9)-[histone H3] + 2 2-oxoglutarate + 2 O2 = L-lysyl(9)-[histone H3] + 2 formaldehyde + 2 succinate + 2 CO2. Histone demethylase that specifically demethylates both mono- and dimethylated 'Lys-9' of histone H3. May act as a transcription regulator controlling hair biology (via targeting of collagens), neural activity, and cell cycle. This chain is Lysine-specific demethylase hairless (Hr), found in Rattus norvegicus (Rat).